Here is a 295-residue protein sequence, read N- to C-terminus: Glutamyl-Q tRNA(Asp) synthetase (295 aa).

Residues 5–9 and E41 each bind L-glutamate; that span reads RFAPS. Residues 8 to 18 carry the 'HIGH' region motif; it reads PSPTGLLHIGS. The Zn(2+) site is built by C97, C99, Y117, and C121. 2 residues coordinate L-glutamate: Y178 and R196. The 'KMSKS' region signature appears at 234–238; the sequence is KWSKQ. Position 237 (K237) interacts with ATP.

This sequence belongs to the class-I aminoacyl-tRNA synthetase family. GluQ subfamily. Requires Zn(2+) as cofactor.

Catalyzes the tRNA-independent activation of glutamate in presence of ATP and the subsequent transfer of glutamate onto a tRNA(Asp). Glutamate is transferred on the 2-amino-5-(4,5-dihydroxy-2-cyclopenten-1-yl) moiety of the queuosine in the wobble position of the QUC anticodon. This chain is Glutamyl-Q tRNA(Asp) synthetase, found in Neisseria meningitidis serogroup A / serotype 4A (strain DSM 15465 / Z2491).